A 639-amino-acid chain; its full sequence is 1-deoxy-D-xylulose-5-phosphate synthase (639 aa).

Thiamine diphosphate contacts are provided by residues histidine 76 and 117 to 119 (AHS). Aspartate 148 lines the Mg(2+) pocket. Thiamine diphosphate-binding positions include 149–150 (GS), asparagine 181, tyrosine 288, and glutamate 370. Position 181 (asparagine 181) interacts with Mg(2+).

It belongs to the transketolase family. DXPS subfamily. In terms of assembly, homodimer. Mg(2+) is required as a cofactor. Thiamine diphosphate serves as cofactor.

It catalyses the reaction D-glyceraldehyde 3-phosphate + pyruvate + H(+) = 1-deoxy-D-xylulose 5-phosphate + CO2. Its pathway is metabolic intermediate biosynthesis; 1-deoxy-D-xylulose 5-phosphate biosynthesis; 1-deoxy-D-xylulose 5-phosphate from D-glyceraldehyde 3-phosphate and pyruvate: step 1/1. Functionally, catalyzes the acyloin condensation reaction between C atoms 2 and 3 of pyruvate and glyceraldehyde 3-phosphate to yield 1-deoxy-D-xylulose-5-phosphate (DXP). In Leptothrix cholodnii (strain ATCC 51168 / LMG 8142 / SP-6) (Leptothrix discophora (strain SP-6)), this protein is 1-deoxy-D-xylulose-5-phosphate synthase.